A 650-amino-acid chain; its full sequence is Threonine--tRNA ligase (650 aa).

The region spanning 3 to 65 is the TGS domain; it reads DLVKVTLPDG…DRDARLEIVT (63 aa). A catalytic region spans residues 248-548; that stretch reads DHRRLGPQLG…LTEHYAGAFP (301 aa). Positions 349, 400, and 525 each coordinate Zn(2+).

It belongs to the class-II aminoacyl-tRNA synthetase family. As to quaternary structure, homodimer. Requires Zn(2+) as cofactor.

The protein localises to the cytoplasm. The catalysed reaction is tRNA(Thr) + L-threonine + ATP = L-threonyl-tRNA(Thr) + AMP + diphosphate + H(+). Its function is as follows. Catalyzes the attachment of threonine to tRNA(Thr) in a two-step reaction: L-threonine is first activated by ATP to form Thr-AMP and then transferred to the acceptor end of tRNA(Thr). Also edits incorrectly charged L-seryl-tRNA(Thr). The chain is Threonine--tRNA ligase from Anaeromyxobacter dehalogenans (strain 2CP-C).